Here is a 393-residue protein sequence, read N- to C-terminus: MAKLTLKDLELNNKRVLVRVDFNVPLEAGRVTDNTRIRAALPTIEYLLDHGARVILMSHLGRPKGKVKEELRLDPVARELESLLGRQVHKVNDCVGPEVEAAAAALKPGEVLLLENLRFHPEEEKNDPGFARQLASLADVYVNDAFGAAHRAHASTEGVAHYLPAAAGFLLQKEIETLGKALADPERPFVAIIGGAKVSDKISVIRNLLTKVDTLIIGGGMANTFLKAQGYAMGKSLVEEDQVPLAQELIQLAAQKGVKMLLPRDLVVAQEFKADAPHQVVAVNAVPDGWMALDIGPETARAYAGALEGARTVVWNGPMGVFEMEAFAHGTEAVARAVAAVDGMTIVGGGDSVAAVEKMGVAGKIGHISTGGGASLEFLEGKALPGVVALTEK.

Residues 21–23 (DFN), R36, 59–62 (HLGR), R118, and R151 each bind substrate. Residues K201, E323, and 349-352 (GGDS) each bind ATP.

It belongs to the phosphoglycerate kinase family. Monomer.

Its subcellular location is the cytoplasm. The catalysed reaction is (2R)-3-phosphoglycerate + ATP = (2R)-3-phospho-glyceroyl phosphate + ADP. The protein operates within carbohydrate degradation; glycolysis; pyruvate from D-glyceraldehyde 3-phosphate: step 2/5. The protein is Phosphoglycerate kinase of Moorella thermoacetica (strain ATCC 39073 / JCM 9320).